The chain runs to 547 residues: Chaperonin GroEL (547 aa).

ATP-binding positions include 30-33 (TLGP), K51, 87-91 (DGTTT), G415, and D496.

It belongs to the chaperonin (HSP60) family. Forms a cylinder of 14 subunits composed of two heptameric rings stacked back-to-back. Interacts with the co-chaperonin GroES.

It is found in the cytoplasm. The enzyme catalyses ATP + H2O + a folded polypeptide = ADP + phosphate + an unfolded polypeptide.. In terms of biological role, together with its co-chaperonin GroES, plays an essential role in assisting protein folding. The GroEL-GroES system forms a nano-cage that allows encapsulation of the non-native substrate proteins and provides a physical environment optimized to promote and accelerate protein folding. The chain is Chaperonin GroEL from Mannheimia succiniciproducens (strain KCTC 0769BP / MBEL55E).